Here is a 404-residue protein sequence, read N- to C-terminus: MRKLGLALSIMGLLLVSIVAGCIGGGTETKTEAKKVKVAILFDVGGRGDLSFNDMAYLGAERAKKELGVEIEYMTPKSKEDMKPLLEQLAQSKEYDLLVLVGFLWTSPLNEVADKYPDQKFALIDSTTGKVRENEVDILFREQEAAALMGVIASGMAYELGGDTIGAVAGMDIPPLWKFHIGYLFGAKYFEKKTGKPVKLLWQYTGTFGDTQVGYNTAMQLLQQGAKVLYGLAGLTHVGMFDAVKDWNEQGRGKALAMGQDASQEWYAPKYIPISGAKRVDVAVYDAIKMVVDGTWKGGIITLGLKENGVGYWDLDGVKQFAEFAKEAGKLKDMTPDEVVQIVKEQREKYIKPYVWDIVHELEEKIKSGEIVFKTPKTHEEYEQIIRELEKGNLNAALEKGSVE.

The first 21 residues, 1 to 21 (MRKLGLALSIMGLLLVSIVAG), serve as a signal peptide directing secretion. Cys22 bears the N-acetylcysteine mark. Cys22 carries S-archaeol cysteine lipidation.

This sequence belongs to the BMP lipoprotein family.

The protein resides in the cell membrane. This is an uncharacterized protein from Pyrococcus abyssi (strain GE5 / Orsay).